The following is a 562-amino-acid chain: O-fucosyltransferase 4 (562 aa).

A disordered region spans residues 10 to 46 (SIQNRLPGSDHTTPSPPTSPHLCRSRSKSSSVSGQQQ). A compositionally biased stretch (low complexity) spans 37 to 46 (KSSSVSGQQQ). A helical; Signal-anchor for type II membrane protein transmembrane segment spans residues 67-87 (GILLFAPIIYISCMLFHLHAA). N-linked (GlcNAc...) asparagine glycosylation is found at N122, N146, N185, and N239. 332–334 (HLR) is a substrate binding site. N-linked (GlcNAc...) asparagine glycans are attached at residues N404, N420, N450, and N555.

It belongs to the glycosyltransferase GT106 family.

It is found in the membrane. Its pathway is glycan metabolism. This chain is O-fucosyltransferase 4, found in Arabidopsis thaliana (Mouse-ear cress).